A 663-amino-acid chain; its full sequence is Meiotically up-regulated gene 60 protein (663 aa).

The 67-residue stretch at 578-644 folds into the KH domain; the sequence is PAEMHFYVPE…SENLWAVRSL (67 aa).

The protein resides in the cytoplasm. The protein localises to the nucleus. It is found in the cytoskeleton. Its subcellular location is the microtubule organizing center. It localises to the spindle pole body. Its function is as follows. Has a role in meiosis. This chain is Meiotically up-regulated gene 60 protein (mug60), found in Schizosaccharomyces pombe (strain 972 / ATCC 24843) (Fission yeast).